An 88-amino-acid polypeptide reads, in one-letter code: Small ribosomal subunit protein bS20 (88 aa).

This sequence belongs to the bacterial ribosomal protein bS20 family. As to quaternary structure, part of the 30S ribosomal subunit.

In terms of biological role, binds directly to 16S ribosomal RNA. In Bacillus subtilis (strain 168), this protein is Small ribosomal subunit protein bS20 (rpsT).